The following is a 147-amino-acid chain: Phospholipase A2 inhibitor subunit A (147 aa).

In terms of domain architecture, C-type lectin spans 62–143 (EICEEAGGHI…DENLLVVCEF (82 aa)). Disulfide bonds link C64-C141 and C119-C133. N103 is a glycosylation site (N-linked (GlcNAc...) asparagine).

It belongs to the alpha-type phospholipase A2 inhibitor family. As to quaternary structure, homo- or heterotrimer; homotrimer of PLI-A chains, two PLI-A and one PLI-B chains, one PLI-A and two PLI-B chains, and homotrimer of PLI-B chains (with a ratio of 1:3:3:1). As to expression, expressed by the liver.

The protein resides in the secreted. Functionally, PLI binds directly phospholipase A2 in the presence or absence of calcium. Inhibitory activity of the PLI-A homotrimer is more specific than that of the PLI-B homotrimer. This is Phospholipase A2 inhibitor subunit A from Protobothrops flavoviridis (Habu).